A 318-amino-acid polypeptide reads, in one-letter code: Acetyl-coenzyme A carboxylase carboxyl transferase subunit alpha (318 aa).

One can recognise a CoA carboxyltransferase C-terminal domain in the interval 34-295 (SIEEEITKLR…KATIKQQLAQ (262 aa)).

It belongs to the AccA family. As to quaternary structure, acetyl-CoA carboxylase is a heterohexamer composed of biotin carboxyl carrier protein (AccB), biotin carboxylase (AccC) and two subunits each of ACCase subunit alpha (AccA) and ACCase subunit beta (AccD).

Its subcellular location is the cytoplasm. It carries out the reaction N(6)-carboxybiotinyl-L-lysyl-[protein] + acetyl-CoA = N(6)-biotinyl-L-lysyl-[protein] + malonyl-CoA. Its pathway is lipid metabolism; malonyl-CoA biosynthesis; malonyl-CoA from acetyl-CoA: step 1/1. Component of the acetyl coenzyme A carboxylase (ACC) complex. First, biotin carboxylase catalyzes the carboxylation of biotin on its carrier protein (BCCP) and then the CO(2) group is transferred by the carboxyltransferase to acetyl-CoA to form malonyl-CoA. The chain is Acetyl-coenzyme A carboxylase carboxyl transferase subunit alpha from Pseudoalteromonas atlantica (strain T6c / ATCC BAA-1087).